We begin with the raw amino-acid sequence, 132 residues long: Intraflagellar transport protein 20 homolog B (132 aa).

Residues 87 to 112 (EAQQQQLYALIAEKKMQLERYRIEYD) are a coiled coil.

Its subcellular location is the golgi apparatus. It localises to the cis-Golgi network. It is found in the cytoplasm. The protein localises to the cytoskeleton. The protein resides in the microtubule organizing center. Its subcellular location is the centrosome. It localises to the centriole. It is found in the cell projection. The protein localises to the cilium. In terms of biological role, involved in ciliary process assembly. May play a role in the trafficking of ciliary membrane proteins from the Golgi complex to the cilium. Regulates the platelet-derived growth factor receptor-alpha (PDGFRA) signaling pathway. Plays an important role in spermatogenesis, particularly spermiogenesis, when germ cells form flagella. The chain is Intraflagellar transport protein 20 homolog B (ift20-b) from Xenopus laevis (African clawed frog).